Here is a 407-residue protein sequence, read N- to C-terminus: Multifunctional CCA protein (407 aa).

ATP-binding residues include Gly-8 and Arg-11. CTP is bound by residues Gly-8 and Arg-11. Positions 21 and 23 each coordinate Mg(2+). Residues Arg-91, Arg-137, and Arg-140 each contribute to the ATP site. CTP contacts are provided by Arg-91, Arg-137, and Arg-140. An HD domain is found at 225–326 (CGDHVMRVLD…LRLLKDCDAL (102 aa)).

Belongs to the tRNA nucleotidyltransferase/poly(A) polymerase family. Bacterial CCA-adding enzyme type 1 subfamily. Monomer. Can also form homodimers and oligomers. Mg(2+) is required as a cofactor. The cofactor is Ni(2+).

It catalyses the reaction a tRNA precursor + 2 CTP + ATP = a tRNA with a 3' CCA end + 3 diphosphate. It carries out the reaction a tRNA with a 3' CCA end + 2 CTP + ATP = a tRNA with a 3' CCACCA end + 3 diphosphate. In terms of biological role, catalyzes the addition and repair of the essential 3'-terminal CCA sequence in tRNAs without using a nucleic acid template. Adds these three nucleotides in the order of C, C, and A to the tRNA nucleotide-73, using CTP and ATP as substrates and producing inorganic pyrophosphate. tRNA 3'-terminal CCA addition is required both for tRNA processing and repair. Also involved in tRNA surveillance by mediating tandem CCA addition to generate a CCACCA at the 3' terminus of unstable tRNAs. While stable tRNAs receive only 3'-terminal CCA, unstable tRNAs are marked with CCACCA and rapidly degraded. The chain is Multifunctional CCA protein from Chromobacterium violaceum (strain ATCC 12472 / DSM 30191 / JCM 1249 / CCUG 213 / NBRC 12614 / NCIMB 9131 / NCTC 9757 / MK).